The primary structure comprises 405 residues: Serine/threonine-protein kinase 2 (405 aa).

In terms of domain architecture, Protein kinase spans 54–405 (NDDFYHISTG…IFSDWINGGN (352 aa)). ATP contacts are provided by residues 60 to 68 (ISTGGYGIV) and Lys84. Residue Asp274 is the Proton acceptor of the active site.

This sequence belongs to the protein kinase superfamily. Ser/Thr protein kinase family. Poxviruses subfamily. In terms of processing, phosphorylated in vivo. Autophosphorylated in vitro.

The protein resides in the host endoplasmic reticulum. The protein localises to the host endoplasmic reticulum-Golgi intermediate compartment. The enzyme catalyses L-seryl-[protein] + ATP = O-phospho-L-seryl-[protein] + ADP + H(+). It carries out the reaction L-threonyl-[protein] + ATP = O-phospho-L-threonyl-[protein] + ADP + H(+). Essential serine-protein kinase involved in the early stage of virion morphogenesis. The protein is Serine/threonine-protein kinase 2 (OPG054) of Vaccinia virus (strain L-IVP) (VACV).